Reading from the N-terminus, the 266-residue chain is Glucosamine-6-phosphate deaminase (266 aa).

Catalysis depends on Asp72, which acts as the Proton acceptor; for enolization step. The For ring-opening step role is filled by Asp141. His143 serves as the catalytic Proton acceptor; for ring-opening step. Glu148 acts as the For ring-opening step in catalysis.

It belongs to the glucosamine/galactosamine-6-phosphate isomerase family. NagB subfamily. As to quaternary structure, homohexamer; trimer of disulfide-linked dimers.

The enzyme catalyses alpha-D-glucosamine 6-phosphate + H2O = beta-D-fructose 6-phosphate + NH4(+). It functions in the pathway amino-sugar metabolism; N-acetylneuraminate degradation; D-fructose 6-phosphate from N-acetylneuraminate: step 5/5. With respect to regulation, allosterically activated by N-acetylglucosamine 6-phosphate (GlcNAc6P). Catalyzes the reversible isomerization-deamination of glucosamine 6-phosphate (GlcN6P) to form fructose 6-phosphate (Fru6P) and ammonium ion. The chain is Glucosamine-6-phosphate deaminase from Escherichia coli O6:H1 (strain CFT073 / ATCC 700928 / UPEC).